A 228-amino-acid polypeptide reads, in one-letter code: Mediator of RNA polymerase II transcription subunit 7-A (228 aa).

This sequence belongs to the Mediator complex subunit 7 family. As to quaternary structure, component of the Mediator complex.

It localises to the nucleus. Component of the Mediator complex, a coactivator involved in the regulated transcription of nearly all RNA polymerase II-dependent genes. Mediator functions as a bridge to convey information from gene-specific regulatory proteins to the basal RNA polymerase II transcription machinery. Mediator is recruited to promoters by direct interactions with regulatory proteins and serves as a scaffold for the assembly of a functional preinitiation complex with RNA polymerase II and the general transcription factors. The polypeptide is Mediator of RNA polymerase II transcription subunit 7-A (med7-a) (Xenopus laevis (African clawed frog)).